A 185-amino-acid chain; its full sequence is Ribosome-recycling factor (185 aa).

Belongs to the RRF family.

Its subcellular location is the cytoplasm. In terms of biological role, responsible for the release of ribosomes from messenger RNA at the termination of protein biosynthesis. May increase the efficiency of translation by recycling ribosomes from one round of translation to another. The polypeptide is Ribosome-recycling factor (Exiguobacterium sibiricum (strain DSM 17290 / CCUG 55495 / CIP 109462 / JCM 13490 / 255-15)).